The following is a 445-amino-acid chain: Tubulin beta-1 chain (445 aa).

The MREI motif signature appears at 1 to 4 (MREI). 8 residues coordinate GTP: Q11, E69, S138, G142, T143, G144, N204, and N226. E69 contributes to the Mg(2+) binding site. Residues 424 to 445 (QYQDATADEQGEFEEEGEEDEA) form a disordered region. A compositionally biased stretch (acidic residues) spans 429 to 445 (TADEQGEFEEEGEEDEA). E438 is modified (5-glutamyl polyglutamate).

It belongs to the tubulin family. As to quaternary structure, dimer of alpha and beta chains. A typical microtubule is a hollow water-filled tube with an outer diameter of 25 nm and an inner diameter of 15 nM. Alpha-beta heterodimers associate head-to-tail to form protofilaments running lengthwise along the microtubule wall with the beta-tubulin subunit facing the microtubule plus end conferring a structural polarity. Microtubules usually have 13 protofilaments but different protofilament numbers can be found in some organisms and specialized cells. Requires Mg(2+) as cofactor. Some glutamate residues at the C-terminus are polyglycylated, resulting in polyglycine chains on the gamma-carboxyl group. Glycylation is mainly limited to tubulin incorporated into axonemes (cilia and flagella) whereas glutamylation is prevalent in neuronal cells, centrioles, axonemes, and the mitotic spindle. Both modifications can coexist on the same protein on adjacent residues, and lowering polyglycylation levels increases polyglutamylation, and reciprocally. The precise function of polyglycylation is still unclear. In terms of processing, some glutamate residues at the C-terminus are polyglutamylated, resulting in polyglutamate chains on the gamma-carboxyl group. Polyglutamylation plays a key role in microtubule severing by spastin (SPAST). SPAST preferentially recognizes and acts on microtubules decorated with short polyglutamate tails: severing activity by SPAST increases as the number of glutamates per tubulin rises from one to eight, but decreases beyond this glutamylation threshold. Highly expressed in skeletal muscle.

Its subcellular location is the cytoplasm. It localises to the cytoskeleton. Functionally, tubulin is the major constituent of microtubules, a cylinder consisting of laterally associated linear protofilaments composed of alpha- and beta-tubulin heterodimers. Microtubules grow by the addition of GTP-tubulin dimers to the microtubule end, where a stabilizing cap forms. Below the cap, tubulin dimers are in GDP-bound state, owing to GTPase activity of alpha-tubulin. This is Tubulin beta-1 chain from Gallus gallus (Chicken).